We begin with the raw amino-acid sequence, 353 residues long: Envelope glycoprotein M (353 aa).

Residues 1-27 (MAKAGVMTLSHVDRMNLRTWTMAIACC) lie on the Intravirion side of the membrane. A helical membrane pass occupies residues 28-48 (LLSFVNIVVFSVAAHFPGIGF). The Virion surface segment spans residues 49 to 82 (PCYYPRIIDFDNMNLTMYNAIHHLTPQLFLDPVQ). Residues 83 to 103 (LIVYVIFTELIFFCVLSYYIV) form a helical membrane-spanning segment. Residues 104 to 132 (CWVQIYFRSEHGTQVNQSTRDINFMGDSA) lie on the Intravirion side of the membrane. A helical transmembrane segment spans residues 133-153 (TCFTFVLTMDTFQIFLLSLSF). Over 154–157 (RLPS) the chain is Virion surface. A helical transmembrane segment spans residues 158 to 178 (MVAFSKCMYFMCLTAFVVTLV). The Intravirion segment spans residues 179–210 (THYESRERSAFALSKIHPKLQGTIRYRTAVVN). The helical transmembrane segment at 211 to 231 (LTQLILGFATMVLAMSLALGF) threads the bilayer. Over 232–240 (GNSFFVKTA) the chain is Virion surface. The helical transmembrane segment at 241–261 (HVVFGAMVAFAIVACVYFSII) threads the bilayer. Over 262 to 270 (ESVLSRYMK) the chain is Intravirion. A helical transmembrane segment spans residues 271 to 291 (VQFGYHIGTILGVCGAMYPII). Over 292–304 (RYEALNASSYARD) the chain is Virion surface. A helical transmembrane segment spans residues 305–325 (INIGITVLLLLCVAFSVIRTV). Residues 326–353 (RFLLRRNKRYRALALDNEEIRALRSDAE) lie on the Intravirion side of the membrane.

It belongs to the herpesviridae glycoprotein M family. In terms of assembly, interacts (via N-terminus) with gN (via N-terminus). The gM-gN heterodimer forms the gCII complex.

The protein resides in the virion membrane. The protein localises to the host Golgi apparatus. It is found in the host trans-Golgi network. It localises to the host endosome membrane. Its subcellular location is the host nucleus inner membrane. Envelope glycoprotein important for virion assembly and egress. Plays a role in the correct incorporation of gH-gL into virion membrane. Directs the glycoprotein N (gN) to the host trans-Golgi network. The protein is Envelope glycoprotein M of Mus musculus (Mouse).